The chain runs to 256 residues: Thiazole synthase (256 aa).

Lysine 95 (schiff-base intermediate with DXP) is an active-site residue. Residues glycine 156, 182–183, and 204–205 contribute to the 1-deoxy-D-xylulose 5-phosphate site; these read AG and NT.

The protein belongs to the ThiG family. In terms of assembly, homotetramer. Forms heterodimers with either ThiH or ThiS.

The protein resides in the cytoplasm. The enzyme catalyses [ThiS sulfur-carrier protein]-C-terminal-Gly-aminoethanethioate + 2-iminoacetate + 1-deoxy-D-xylulose 5-phosphate = [ThiS sulfur-carrier protein]-C-terminal Gly-Gly + 2-[(2R,5Z)-2-carboxy-4-methylthiazol-5(2H)-ylidene]ethyl phosphate + 2 H2O + H(+). The protein operates within cofactor biosynthesis; thiamine diphosphate biosynthesis. Functionally, catalyzes the rearrangement of 1-deoxy-D-xylulose 5-phosphate (DXP) to produce the thiazole phosphate moiety of thiamine. Sulfur is provided by the thiocarboxylate moiety of the carrier protein ThiS. In vitro, sulfur can be provided by H(2)S. This chain is Thiazole synthase, found in Shigella boydii serotype 18 (strain CDC 3083-94 / BS512).